Consider the following 72-residue polypeptide: Hydrophobic protein OSR8 (72 aa).

Transmembrane regions (helical) follow at residues 9–29 (FLEI…RFGC) and 39–59 (LLTI…LVAL).

This sequence belongs to the UPF0057 (PMP3) family.

Its subcellular location is the membrane. This is Hydrophobic protein OSR8 (OSR8) from Oryza sativa subsp. japonica (Rice).